Reading from the N-terminus, the 204-residue chain is Heart- and neural crest derivatives-expressed protein 1 (204 aa).

3 disordered regions span residues 1–24, 57–115, and 172–204; these read MNLV…HPAH, APDF…RTES, and LKKA…EKRD. 2 stretches are compositionally biased toward basic residues: residues 8-22 and 98-110; these read AHHH…HPHP and LGRR…KKER. The region spanning 100–152 is the bHLH domain; it reads RRKGSGPKKERRRTESINSAFAELRECIPNVPADTKLSKIKTLRLATSYIAYL. Position 113 is a phosphothreonine; by PLK4 (threonine 113). Residue serine 115 is modified to Phosphoserine; by PLK4.

In terms of assembly, efficient DNA binding requires dimerization with another bHLH protein. Forms homodimers and heterodimers with TCF3 gene products E12 and E47, HAND2 and HEY1, HEY2 and HEYL (hairy-related transcription factors). Interacts with MDFIC. Interacts with SOX15; the interaction enhances HAND1-induced differentiation of trophoblast giant cells. In terms of processing, phosphorylation by PLK4 disrupts the interaction with MDFIC and leads to translocation into the nucleoplasm, allowing dimerization and transcription factor activity.

The protein localises to the nucleus. The protein resides in the nucleoplasm. It localises to the nucleolus. Functionally, transcription factor that plays an essential role in both trophoblast giant cell differentiation and in cardiac morphogenesis. Binds the DNA sequence 5'-NRTCTG-3' (non-canonical E-box). Acts as a transcriptional repressor of SOX15. In the adult, could be required for ongoing expression of cardiac-specific genes. The sequence is that of Heart- and neural crest derivatives-expressed protein 1 (HAND1) from Ovis aries (Sheep).